Reading from the N-terminus, the 358-residue chain is 3-isopropylmalate dehydrogenase (358 aa).

Position 77–90 (77–90 (GPKWTNLPPDQQPE)) interacts with NAD(+). Arg98, Arg108, Arg137, and Asp226 together coordinate substrate. Asp226, Asp250, and Asp254 together coordinate Mg(2+). 284–296 (GSAPDIAGKGIAN) is an NAD(+) binding site.

It belongs to the isocitrate and isopropylmalate dehydrogenases family. LeuB type 1 subfamily. In terms of assembly, homodimer. Mg(2+) is required as a cofactor. The cofactor is Mn(2+).

It localises to the cytoplasm. The enzyme catalyses (2R,3S)-3-isopropylmalate + NAD(+) = 4-methyl-2-oxopentanoate + CO2 + NADH. The protein operates within amino-acid biosynthesis; L-leucine biosynthesis; L-leucine from 3-methyl-2-oxobutanoate: step 3/4. Its function is as follows. Catalyzes the oxidation of 3-carboxy-2-hydroxy-4-methylpentanoate (3-isopropylmalate) to 3-carboxy-4-methyl-2-oxopentanoate. The product decarboxylates to 4-methyl-2 oxopentanoate. This chain is 3-isopropylmalate dehydrogenase, found in Haemophilus influenzae (strain 86-028NP).